The sequence spans 364 residues: tRNA N6-adenosine threonylcarbamoyltransferase (364 aa).

The Fe cation site is built by His-118 and His-122. Substrate-binding positions include 140–144, Asp-173, Gly-186, and Asn-288; that span reads LVSGG. Fe cation is bound at residue Asp-316.

It belongs to the KAE1 / TsaD family. Fe(2+) is required as a cofactor.

It localises to the cytoplasm. The enzyme catalyses L-threonylcarbamoyladenylate + adenosine(37) in tRNA = N(6)-L-threonylcarbamoyladenosine(37) in tRNA + AMP + H(+). Its function is as follows. Required for the formation of a threonylcarbamoyl group on adenosine at position 37 (t(6)A37) in tRNAs that read codons beginning with adenine. Is involved in the transfer of the threonylcarbamoyl moiety of threonylcarbamoyl-AMP (TC-AMP) to the N6 group of A37, together with TsaE and TsaB. TsaD likely plays a direct catalytic role in this reaction. The sequence is that of tRNA N6-adenosine threonylcarbamoyltransferase from Cereibacter sphaeroides (strain ATCC 17023 / DSM 158 / JCM 6121 / CCUG 31486 / LMG 2827 / NBRC 12203 / NCIMB 8253 / ATH 2.4.1.) (Rhodobacter sphaeroides).